Here is a 74-residue protein sequence, read N- to C-terminus: Veswaprin-a (74 aa).

The N-terminal stretch at 1 to 24 (MSSGGLLLLLGLLTLWAEVTPISG) is a signal peptide. The WAP domain maps to 27–71 (RPKKPGLCPPRPQKPCVKECKNDWSCPGQQKCCNYGCIDECRDPI). Intrachain disulfides connect cysteine 34-cysteine 59, cysteine 42-cysteine 63, cysteine 46-cysteine 58, and cysteine 52-cysteine 67.

This sequence belongs to the venom waprin family. As to expression, expressed by the venom gland.

The protein localises to the secreted. Functionally, damages membranes of susceptible bacteria. Has no hemolytic activity. Not toxic to mice. Does not inhibit the proteinases elastase and cathepsin G. This Demansia vestigiata (Lesser black whip snake) protein is Veswaprin-a.